The following is a 586-amino-acid chain: DNA-directed RNA polymerase subunit beta' (586 aa).

Zn(2+) is bound by residues Cys64, Cys66, Cys85, and Cys88. The Mg(2+) site is built by Asp448, Asp450, and Asp452.

It belongs to the RNA polymerase beta' chain family. RpoC1 subfamily. In terms of assembly, in plastids the minimal PEP RNA polymerase catalytic core is composed of four subunits: alpha, beta, beta', and beta''. When a (nuclear-encoded) sigma factor is associated with the core the holoenzyme is formed, which can initiate transcription. Mg(2+) is required as a cofactor. Requires Zn(2+) as cofactor.

It localises to the plastid. It is found in the chloroplast. It catalyses the reaction RNA(n) + a ribonucleoside 5'-triphosphate = RNA(n+1) + diphosphate. Its function is as follows. DNA-dependent RNA polymerase catalyzes the transcription of DNA into RNA using the four ribonucleoside triphosphates as substrates. The chain is DNA-directed RNA polymerase subunit beta' from Euglena gracilis.